A 55-amino-acid polypeptide reads, in one-letter code: Large ribosomal subunit protein bL33A (55 aa).

The protein belongs to the bacterial ribosomal protein bL33 family.

The chain is Large ribosomal subunit protein bL33A from Rhodococcus jostii (strain RHA1).